Here is a 132-residue protein sequence, read N- to C-terminus: Precursor of CEP10 (132 aa).

The first 19 residues, 1–19 (MKLFIIIVVTSLTISKVFD), serve as a signal peptide directing secretion. The propeptide occupies 20-66 (KTLVTIEARNLRKMDRHEHFNANEDFVEAKMLKKIDNKNNLNNRCIN). Hydroxyproline is present on residues Pro70 and Pro73. The propeptide occupies 82 to 91 (PKVINNKFTK). Hydroxyproline is present on residues Pro95, Pro98, and Pro102. The propeptide occupies 107 to 116 (LRVVNNKFTN). Pro120, Pro123, and Pro127 each carry hydroxyproline. Residue Pro132 is a propeptide.

This sequence belongs to the C-terminally encoded plant signaling peptide (CEP) family. In terms of assembly, interacts with CEP receptors (e.g. CEPR1 and CEPR2). The mature small signaling peptide is generated by proteolytic processing of the longer precursor.

Its subcellular location is the secreted. The protein localises to the extracellular space. It is found in the apoplast. Extracellular signaling peptide that may regulate primary root growth rate and systemic nitrogen (N)-demand signaling. The polypeptide is Precursor of CEP10 (Arabidopsis thaliana (Mouse-ear cress)).